The following is a 475-amino-acid chain: Bifunctional protein HldE (475 aa).

Positions 1-321 (MADKIDISLY…RALHQITASH (321 aa)) are ribokinase. 197–200 (NLKE) contributes to the ATP binding site. The active site involves Asp266. The segment at 346 to 475 (MTNGCFDILH…TSRLVEKMLN (130 aa)) is cytidylyltransferase.

It in the N-terminal section; belongs to the carbohydrate kinase PfkB family. The protein in the C-terminal section; belongs to the cytidylyltransferase family. Homodimer.

The catalysed reaction is D-glycero-beta-D-manno-heptose 7-phosphate + ATP = D-glycero-beta-D-manno-heptose 1,7-bisphosphate + ADP + H(+). It carries out the reaction D-glycero-beta-D-manno-heptose 1-phosphate + ATP + H(+) = ADP-D-glycero-beta-D-manno-heptose + diphosphate. It participates in nucleotide-sugar biosynthesis; ADP-L-glycero-beta-D-manno-heptose biosynthesis; ADP-L-glycero-beta-D-manno-heptose from D-glycero-beta-D-manno-heptose 7-phosphate: step 1/4. The protein operates within nucleotide-sugar biosynthesis; ADP-L-glycero-beta-D-manno-heptose biosynthesis; ADP-L-glycero-beta-D-manno-heptose from D-glycero-beta-D-manno-heptose 7-phosphate: step 3/4. Catalyzes the phosphorylation of D-glycero-D-manno-heptose 7-phosphate at the C-1 position to selectively form D-glycero-beta-D-manno-heptose-1,7-bisphosphate. Its function is as follows. Catalyzes the ADP transfer from ATP to D-glycero-beta-D-manno-heptose 1-phosphate, yielding ADP-D-glycero-beta-D-manno-heptose. In Coxiella burnetii (strain RSA 331 / Henzerling II), this protein is Bifunctional protein HldE.